The following is a 469-amino-acid chain: 3-isopropylmalate dehydratase large subunit (469 aa).

3 residues coordinate [4Fe-4S] cluster: cysteine 347, cysteine 410, and cysteine 413.

The protein belongs to the aconitase/IPM isomerase family. LeuC type 1 subfamily. As to quaternary structure, heterodimer of LeuC and LeuD. Requires [4Fe-4S] cluster as cofactor.

It catalyses the reaction (2R,3S)-3-isopropylmalate = (2S)-2-isopropylmalate. It participates in amino-acid biosynthesis; L-leucine biosynthesis; L-leucine from 3-methyl-2-oxobutanoate: step 2/4. In terms of biological role, catalyzes the isomerization between 2-isopropylmalate and 3-isopropylmalate, via the formation of 2-isopropylmaleate. This Burkholderia ambifaria (strain MC40-6) protein is 3-isopropylmalate dehydratase large subunit.